The chain runs to 129 residues: NADH-quinone oxidoreductase subunit 15 (129 aa).

It belongs to the complex I Nqo15 family. NDH-1 is composed of 15 different subunits, Nqo1 to Nqo15. The complex has a L-shaped structure, with the hydrophobic arm (subunits Nqo7, Nqo8 and Nqo10 to Nqo14) embedded in the membrane and the hydrophilic peripheral arm (subunits Nqo1 to Nqo6, Nqo9 and Nqo15) protruding into the bacterial cytoplasm. The hydrophilic domain contains all the redox centers. Nqo15 is bound to the side of the complex near the N-terminus of Nqo3, where it interacts with subunits Nqo3, Nqo2, Nqo1, Nqo9 and Nqo4.

The protein localises to the cell membrane. It catalyses the reaction a quinone + NADH + 5 H(+)(in) = a quinol + NAD(+) + 4 H(+)(out). Its function is as follows. NDH-1 shuttles electrons from NADH, via FMN and iron-sulfur (Fe-S) centers, to quinones in the respiratory chain. The immediate electron acceptor for the enzyme in this species is menaquinone. Couples the redox reaction to proton translocation (for every two electrons transferred, four hydrogen ions are translocated across the cytoplasmic membrane), and thus conserves the redox energy in a proton gradient required for the synthesis of ATP. The Nqo15 subunit has probably a role in complex stabilization, and may be also involved in the storage of iron for iron-sulfur cluster regeneration in the complex. The protein is NADH-quinone oxidoreductase subunit 15 (nqo15) of Thermus thermophilus (strain ATCC 27634 / DSM 579 / HB8).